Here is a 254-residue protein sequence, read N- to C-terminus: Proteasome activator complex subunit 3 (254 aa).

A2 is modified (N-acetylalanine). Phosphoserine occurs at positions 17 and 24. K195 bears the N6-acetyllysine; by P300/CBP mark. S247 carries the post-translational modification Phosphoserine; by CHEK2.

It belongs to the PA28 family. As to quaternary structure, homoheptamer; the stability of the heptamer is essential for the specific activation of the trypsine-like subunit and inhibition of the chymotrypsin-like and postglutamyl-preferring (PGPH) subunits of the proteasome. Interacts with p53/TP53, MDM2 and MAP3K3. Associates with the proteasome. Interacts with CCAR2. Interacts with PSME3IP1 (via C-terminus); the interaction is direct and promotes the association of PSME3 with the 20S proteasome. Interacts with COIL; the interaction is inhibited by PSME3IP1. Post-translationally, phosphorylated by MAP3K3. Phosphorylation at Ser-247 promotes its association with CCAR2. In terms of processing, acetylation at the major site Lys-195 is important for oligomerization and ability to degrade its target substrates. Deacetylated by SIRT1.

Its subcellular location is the nucleus. It localises to the cytoplasm. In terms of biological role, subunit of the 11S REG-gamma (also called PA28-gamma) proteasome regulator, a doughnut-shaped homoheptamer which associates with the proteasome. 11S REG-gamma activates the trypsin-like catalytic subunit of the proteasome but inhibits the chymotrypsin-like and postglutamyl-preferring (PGPH) subunits. Facilitates the MDM2-p53/TP53 interaction which promotes ubiquitination- and MDM2-dependent proteasomal degradation of p53/TP53, limiting its accumulation and resulting in inhibited apoptosis after DNA damage. May also be involved in cell cycle regulation. Mediates CCAR2 and CHEK2-dependent SIRT1 inhibition. This chain is Proteasome activator complex subunit 3 (PSME3), found in Pongo abelii (Sumatran orangutan).